Consider the following 1103-residue polypeptide: PH, RCC1 and FYVE domains-containing protein 1 (1103 aa).

In terms of domain architecture, PH spans 22–123; that stretch reads KKGTQLLKYG…IWIGGLKTLI (102 aa). Residues 144–233 are disordered; the sequence is DASRELTSSS…SSSHGSAADD (90 aa). 2 stretches are compositionally biased toward low complexity: residues 151 to 169 and 217 to 231; these read SSSP…SSPG and SVSS…GSAA. 7 RCC1 repeats span residues 237 to 298, 299 to 351, 353 to 406, 407 to 458, 471 to 522, 524 to 574, and 575 to 626; these read LGDV…FVTR, QGEI…AVTL, GELY…LITS, YGRL…AVVE, SGKL…GLTT, GQVF…ALTS, and RNEV…AICL. The segment at 632-694 adopts an FYVE-type zinc-finger fold; that stretch reads GAEQSQCSTC…VCDSCYVKLS (63 aa). Cys638, Cys641, Cys654, Cys657, Cys662, Cys665, Cys686, and Cys689 together coordinate Zn(2+). The tract at residues 783–818 is disordered; it reads ATPKLAQAPSGISSRSVSPFSRRSSPPRSATPMPST. Over residues 791 to 818 the composition is skewed to low complexity; it reads PSGISSRSVSPFSRRSSPPRSATPMPST. The stretch at 828–904 forms a coiled coil; the sequence is ADNMKKTNEI…IAQLKDVAEK (77 aa). The segment covering 962-979 has biased composition (polar residues); that stretch reads NLQSPKQTPRASERNSNA. The interval 962-988 is disordered; sequence NLQSPKQTPRASERNSNAYPADPRLSS. The BRX domain maps to 1023 to 1078; it reads AEWIEQYEPGVYITLVALHDGTRDLRRVRFSRRRFGEHQAETWWSENREKVYEKYN. The tract at residues 1079-1103 is disordered; the sequence is VRVSEKSTASQTHRDRDEEEEDIPH.

As to expression, mostly expressed in flowers, and, to a lower extent, in stems, leaves, siliques, seeds.

Binds to phosphatidic acid and to phosphoinositides such as PtdIns3P, PtdIns(3,4)P(2), PtdIns(3,4,5)P(3) and PtdIns(4,5)P(2). Catalyzes guanine nucleotide exchange on specific Rab proteins. This chain is PH, RCC1 and FYVE domains-containing protein 1, found in Arabidopsis thaliana (Mouse-ear cress).